The chain runs to 404 residues: Probable tRNA sulfurtransferase (404 aa).

The region spanning 61-166 is the THUMP domain; it reads EAVSERLKDV…SGYSYIMCDE (106 aa). ATP-binding positions include 184-185, 209-210, arginine 266, glycine 288, and glutamine 297; these read LL and HF.

This sequence belongs to the ThiI family.

Its subcellular location is the cytoplasm. It carries out the reaction [ThiI sulfur-carrier protein]-S-sulfanyl-L-cysteine + a uridine in tRNA + 2 reduced [2Fe-2S]-[ferredoxin] + ATP + H(+) = [ThiI sulfur-carrier protein]-L-cysteine + a 4-thiouridine in tRNA + 2 oxidized [2Fe-2S]-[ferredoxin] + AMP + diphosphate. The enzyme catalyses [ThiS sulfur-carrier protein]-C-terminal Gly-Gly-AMP + S-sulfanyl-L-cysteinyl-[cysteine desulfurase] + AH2 = [ThiS sulfur-carrier protein]-C-terminal-Gly-aminoethanethioate + L-cysteinyl-[cysteine desulfurase] + A + AMP + 2 H(+). Its pathway is cofactor biosynthesis; thiamine diphosphate biosynthesis. Functionally, catalyzes the ATP-dependent transfer of a sulfur to tRNA to produce 4-thiouridine in position 8 of tRNAs, which functions as a near-UV photosensor. Also catalyzes the transfer of sulfur to the sulfur carrier protein ThiS, forming ThiS-thiocarboxylate. This is a step in the synthesis of thiazole, in the thiamine biosynthesis pathway. The sulfur is donated as persulfide by IscS. The protein is Probable tRNA sulfurtransferase of Bacillus cereus (strain AH820).